The sequence spans 442 residues: Trigger factor (442 aa).

One can recognise a PPIase FKBP-type domain in the interval 163–248 (YDRVTINYCI…IIKIEKKQEL (86 aa)).

This sequence belongs to the FKBP-type PPIase family. Tig subfamily.

It is found in the cytoplasm. The enzyme catalyses [protein]-peptidylproline (omega=180) = [protein]-peptidylproline (omega=0). Involved in protein export. Acts as a chaperone by maintaining the newly synthesized protein in an open conformation. Functions as a peptidyl-prolyl cis-trans isomerase. This Buchnera aphidicola subsp. Acyrthosiphon pisum (strain Tuc7) protein is Trigger factor.